The following is a 398-amino-acid chain: Carbamoyl phosphate synthase small chain (398 aa).

CPSase stretches follow at residues M1 to A205 and M1 to N207. S60, G257, and G259 together coordinate L-glutamine. In terms of domain architecture, Glutamine amidotransferase type-1 spans H209–T397. C286 (nucleophile) is an active-site residue. L-glutamine-binding residues include L287, Q290, N328, G330, and F331. Residues H370 and E372 contribute to the active site.

This sequence belongs to the CarA family. In terms of assembly, composed of two chains; the small (or glutamine) chain promotes the hydrolysis of glutamine to ammonia, which is used by the large (or ammonia) chain to synthesize carbamoyl phosphate. Tetramer of heterodimers (alpha,beta)4.

It catalyses the reaction hydrogencarbonate + L-glutamine + 2 ATP + H2O = carbamoyl phosphate + L-glutamate + 2 ADP + phosphate + 2 H(+). The catalysed reaction is L-glutamine + H2O = L-glutamate + NH4(+). Its pathway is amino-acid biosynthesis; L-arginine biosynthesis; carbamoyl phosphate from bicarbonate: step 1/1. It participates in pyrimidine metabolism; UMP biosynthesis via de novo pathway; (S)-dihydroorotate from bicarbonate: step 1/3. Small subunit of the glutamine-dependent carbamoyl phosphate synthetase (CPSase). CPSase catalyzes the formation of carbamoyl phosphate from the ammonia moiety of glutamine, carbonate, and phosphate donated by ATP, constituting the first step of 2 biosynthetic pathways, one leading to arginine and/or urea and the other to pyrimidine nucleotides. The small subunit (glutamine amidotransferase) binds and cleaves glutamine to supply the large subunit with the substrate ammonia. This chain is Carbamoyl phosphate synthase small chain, found in Bartonella quintana (strain Toulouse) (Rochalimaea quintana).